Consider the following 478-residue polypeptide: Glycogen synthase (478 aa).

Lys15 provides a ligand contact to ADP-alpha-D-glucose.

The protein belongs to the glycosyltransferase 1 family. Bacterial/plant glycogen synthase subfamily.

The catalysed reaction is [(1-&gt;4)-alpha-D-glucosyl](n) + ADP-alpha-D-glucose = [(1-&gt;4)-alpha-D-glucosyl](n+1) + ADP + H(+). It functions in the pathway glycan biosynthesis; glycogen biosynthesis. Synthesizes alpha-1,4-glucan chains using ADP-glucose. This Actinobacillus pleuropneumoniae serotype 5b (strain L20) protein is Glycogen synthase.